Reading from the N-terminus, the 230-residue chain is Phosphoglycerate mutase-like protein 4 (230 aa).

Histidine 21 (tele-phosphohistidine intermediate) is an active-site residue. The active-site Proton donor/acceptor is glutamate 96.

The protein belongs to the phosphoglycerate mutase family.

Its function is as follows. May play a role in carbohydrates metabolism. This chain is Phosphoglycerate mutase-like protein 4, found in Arabidopsis thaliana (Mouse-ear cress).